The chain runs to 228 residues: Cytochrome c biogenesis ATP-binding export protein CcmA (228 aa).

The 226-residue stretch at 2–227 folds into the ABC transporter domain; sequence LSIERLGVGR…LHLERSGAWL (226 aa). 34–41 provides a ligand contact to ATP; that stretch reads GANGSGKT. A disordered region spans residues 106–126; sequence GAPDGTSSVPASGRSGVAAPP.

This sequence belongs to the ABC transporter superfamily. CcmA exporter (TC 3.A.1.107) family. As to quaternary structure, the complex is composed of two ATP-binding proteins (CcmA) and two transmembrane proteins (CcmB).

It is found in the cell inner membrane. It carries out the reaction heme b(in) + ATP + H2O = heme b(out) + ADP + phosphate + H(+). In terms of biological role, part of the ABC transporter complex CcmAB involved in the biogenesis of c-type cytochromes; once thought to export heme, this seems not to be the case, but its exact role is uncertain. Responsible for energy coupling to the transport system. The protein is Cytochrome c biogenesis ATP-binding export protein CcmA of Paraburkholderia xenovorans (strain LB400).